The following is an 804-amino-acid chain: RasGAP-activating-like protein 1 (804 aa).

C2 domains follow at residues 1–105 (MAKS…DSWI) and 116–231 (VQGE…KGWF). The Ca(2+) site is built by aspartate 21, aspartate 27, aspartate 74, aspartate 76, aspartate 82, aspartate 149, aspartate 155, aspartate 202, aspartate 204, and aspartate 210. One can recognise a Ras-GAP domain in the interval 317-545 (GLAGRFLDYL…SRVRDFLDRL (229 aa)). One can recognise a PH domain in the interval 565-672 (AIVREGYLLK…WLSALRKASA (108 aa)). Residues 674 to 710 (NPNKLAACHPGAFRSARWTCCLQAERSAAGCSRTHSA) form a Btk-type zinc finger. Positions 682, 693, 694, and 704 each coordinate Zn(2+).

Ca(2+) serves as cofactor. As to expression, highly expressed in thyroid and adrenal medulla, lower expression in brain, spinal cord and trachea. Expressed in melanocytes.

Probable inhibitory regulator of the Ras-cyclic AMP pathway. Plays a role in dendrite formation by melanocytes. The sequence is that of RasGAP-activating-like protein 1 from Homo sapiens (Human).